A 635-amino-acid chain; its full sequence is MAKYRGKPFQLYVKLSCSTMMATSIILTNILPYDAQAASEKDTEITKEILSKQDLLDKVDKAIRQIEQLKQLSASSKEHYKAQLNEAKTASQIDEIIKRANELDSKDNKSSHTEMNGQSDIDSKLDQLLKDLNEVSSNVDRGQQSGEDDLNAMKNDMSQTATTKHGEKDDKNDEAMVNKALEDLDHLNQQIHKSKDASKDTSEDPAVSTTDNNHEVAKTPNNDGSGHVVLNKFLSNEENQSHSNRLTDKLQGSDKINHAMIEKLAKSNASTQHYTYHKLNTLQSLDQRIANTQLPKNQKSDLMSEVNKTKERIKSQRNIILEELARTDDKKYATQSILESIFNKDEAVKILKDIRVDGKTDQQIADQITRHIDQLSLTTSDDLLTSLIDQSQDKSLLISQILQTKLGKAEADKLAKDWTNKGLSNRQIVDQLKKHFASTGDTSSDDILKAILNNAKDKKQAIETILATRIERQKAKLLADLITKIETDQNKIFNLVKSALNGKADDLLNLQKRLNQTKKDIDYILSPIVNRPSLLDRLNKNGKTTDLNKLANLMNQGSDLLDSIPDIPTPKPEKTLTLGKGNGLLSGLLNADGNVSLPKAGETIKEHWLPISVIVGAMGVLMIWLSRRNKLKNKA.

A signal peptide spans 1 to 37 (MAKYRGKPFQLYVKLSCSTMMATSIILTNILPYDAQA). Basic and acidic residues-rich tracts occupy residues 101-112 (NELDSKDNKSSH) and 193-202 (KSKDASKDTS). Disordered regions lie at residues 101–122 (NELD…SDID) and 192–228 (HKSK…SGHV). The short motif at 597 to 601 (LPKAG) is the LPXTG sorting signal element. Residue Ala-600 is modified to Pentaglycyl murein peptidoglycan amidated alanine. A propeptide spans 601 to 635 (GETIKEHWLPISVIVGAMGVLMIWLSRRNKLKNKA) (removed by sortase).

It is found in the secreted. The protein localises to the cell wall. This chain is Surface protein F, found in Staphylococcus aureus (strain NCTC 8325 / PS 47).